The sequence spans 136 residues: Small ribosomal subunit protein uS9 (136 aa).

The disordered stretch occupies residues 96 to 136; it reads LSPDNRKPLKTEGHLSRDPRAKERRKYGLKKARKAPQFSKR. A compositionally biased stretch (basic and acidic residues) spans 98–116; it reads PDNRKPLKTEGHLSRDPRA. Over residues 117–136 the composition is skewed to basic residues; it reads KERRKYGLKKARKAPQFSKR.

This sequence belongs to the universal ribosomal protein uS9 family.

This is Small ribosomal subunit protein uS9 from Prochlorococcus marinus (strain MIT 9515).